Reading from the N-terminus, the 314-residue chain is DNA-directed RNA polymerase subunit alpha (314 aa).

The interval 1-228 is alpha N-terminal domain (alpha-NTD); it reads MIEIEKPKIE…EHLNIFVGLT (228 aa). Positions 245–314 are alpha C-terminal domain (alpha-CTD); the sequence is KEKVLEMTIE…ELGLGLRKDD (70 aa).

It belongs to the RNA polymerase alpha chain family. In terms of assembly, homodimer. RNAP is composed of a core of 2 alpha, a beta and a beta' subunit. The core is associated with a delta subunit, and at least one of epsilon or omega. When a sigma factor is associated with the core the holoenzyme is formed, which can initiate transcription.

It catalyses the reaction RNA(n) + a ribonucleoside 5'-triphosphate = RNA(n+1) + diphosphate. Its function is as follows. DNA-dependent RNA polymerase catalyzes the transcription of DNA into RNA using the four ribonucleoside triphosphates as substrates. This is DNA-directed RNA polymerase subunit alpha from Bacillus subtilis (strain 168).